The chain runs to 380 residues: Homoserine O-acetyltransferase (380 aa).

One can recognise an AB hydrolase-1 domain in the interval 59–363 (NVVMVLHALT…IYGHDGFLVE (305 aa)). The Nucleophile role is filled by serine 164. A substrate-binding site is contributed by arginine 234. Residues aspartate 327 and histidine 357 contribute to the active site. Aspartate 358 is a substrate binding site.

The protein belongs to the AB hydrolase superfamily. MetX family. As to quaternary structure, homodimer.

It is found in the cytoplasm. It carries out the reaction L-homoserine + acetyl-CoA = O-acetyl-L-homoserine + CoA. Its pathway is amino-acid biosynthesis; L-methionine biosynthesis via de novo pathway; O-acetyl-L-homoserine from L-homoserine: step 1/1. Its function is as follows. Transfers an acetyl group from acetyl-CoA to L-homoserine, forming acetyl-L-homoserine. The polypeptide is Homoserine O-acetyltransferase (Mycolicibacterium smegmatis (strain ATCC 700084 / mc(2)155) (Mycobacterium smegmatis)).